The following is a 338-amino-acid chain: MNNLYQRDCLRLLDFTSLELQNIITLAQKLKQYKKNNKEIQLLKKKNIALIFEKESTRTRCSFEVAAFDQGAHVTYLGPGSTHLGTKESIEDTAKILGRLYDGIQYRGHHHSTIEILAKNSKVPVWNGLTEKFHPTQLLADLLTIKEIFPERKFYEIKCAYVGDAHNNMGNSLLEAASLVGLDLRLVAPKECWPEKNIFKFCKEQIKNKKGNIICTENINEGVKNVDFIYTDVWVSMGESKEVWKKRIELLSSYQVNSLMLKITNNPQVKVLHCLPALHDQKTCTVKSILKKYGFKNGMEITDEVFQKNQKIIFEQAENRLHTIKAILVSSLLKTIKF.

Residues 56–59 (STRT), arginine 107, and 134–137 (HPTQ) contribute to the carbamoyl phosphate site. L-ornithine contacts are provided by residues asparagine 168, aspartate 232, and 236 to 237 (SM). Carbamoyl phosphate-binding positions include 274–275 (CL) and arginine 320.

The protein belongs to the aspartate/ornithine carbamoyltransferase superfamily. OTCase family.

The protein localises to the cytoplasm. The enzyme catalyses carbamoyl phosphate + L-ornithine = L-citrulline + phosphate + H(+). It functions in the pathway amino-acid degradation; L-arginine degradation via ADI pathway; carbamoyl phosphate from L-arginine: step 2/2. Reversibly catalyzes the transfer of the carbamoyl group from carbamoyl phosphate (CP) to the N(epsilon) atom of ornithine (ORN) to produce L-citrulline. In Buchnera aphidicola subsp. Acyrthosiphon pisum (strain 5A), this protein is Ornithine carbamoyltransferase.